The following is a 290-amino-acid chain: Bifunctional protein FolD (290 aa).

NADP(+)-binding positions include 164–166 (GRS), S193, and I234.

Belongs to the tetrahydrofolate dehydrogenase/cyclohydrolase family. Homodimer.

The enzyme catalyses (6R)-5,10-methylene-5,6,7,8-tetrahydrofolate + NADP(+) = (6R)-5,10-methenyltetrahydrofolate + NADPH. It catalyses the reaction (6R)-5,10-methenyltetrahydrofolate + H2O = (6R)-10-formyltetrahydrofolate + H(+). Its pathway is one-carbon metabolism; tetrahydrofolate interconversion. Functionally, catalyzes the oxidation of 5,10-methylenetetrahydrofolate to 5,10-methenyltetrahydrofolate and then the hydrolysis of 5,10-methenyltetrahydrofolate to 10-formyltetrahydrofolate. The protein is Bifunctional protein FolD of Cytophaga hutchinsonii (strain ATCC 33406 / DSM 1761 / CIP 103989 / NBRC 15051 / NCIMB 9469 / D465).